The following is a 152-amino-acid chain: Glycine cleavage system H protein, mitochondrial (152 aa).

The transit peptide at 1-31 (MALRMWASSTANALRLSSATRPHYSPLSRCF) directs the protein to the mitochondrion. The Lipoyl-binding domain occupies 53-135 (VATVGITDHA…YEDGWMIKVK (83 aa)). K94 is subject to N6-lipoyllysine.

The protein belongs to the GcvH family. The glycine cleavage system is composed of four proteins: P, T, L and H. (R)-lipoate serves as cofactor.

The protein resides in the mitochondrion. Functionally, the glycine cleavage system catalyzes the degradation of glycine. The H protein shuttles the methylamine group of glycine from the P protein to the T protein. This chain is Glycine cleavage system H protein, mitochondrial (GDCSH), found in Flaveria pubescens (Yellowtops).